Consider the following 89-residue polypeptide: Large ribosomal subunit protein bL31B (89 aa).

The protein belongs to the bacterial ribosomal protein bL31 family. Type B subfamily. As to quaternary structure, part of the 50S ribosomal subunit.

This is Large ribosomal subunit protein bL31B from Pseudomonas fluorescens (strain ATCC BAA-477 / NRRL B-23932 / Pf-5).